The chain runs to 298 residues: MADEAGTRSAGGRPIPAAEPLRPALSRQRSQGAVHLRVAPAGTAADAPTRIVDLAESGPLRLRCPRQGAERMLEGVLVNTGGGIACGDVFTVSVTVEPGGACVLTTTAAEKIYRSDGPCAEIVNRASVGAGGRLDWLPQETILFDRARLVRRFEADLAPDASLLVAEIAVLGRAARGESLEQALFEDRWRIRRDGRLVYADSLRLDGAVTALMNRRAIGGGARALATILDLSLRAEGRLDEARALLDALPAQVEAGASAWNGHLAVRMLAPTVAPLRDAAARFLAAWRGQPMPRVWQT.

A disordered region spans residues 1-30; the sequence is MADEAGTRSAGGRPIPAAEPLRPALSRQRS.

This sequence belongs to the UreD family. UreD, UreF and UreG form a complex that acts as a GTP-hydrolysis-dependent molecular chaperone, activating the urease apoprotein by helping to assemble the nickel containing metallocenter of UreC. The UreE protein probably delivers the nickel.

Its subcellular location is the cytoplasm. In terms of biological role, required for maturation of urease via the functional incorporation of the urease nickel metallocenter. This chain is Urease accessory protein UreD 3, found in Methylorubrum extorquens (strain PA1) (Methylobacterium extorquens).